The primary structure comprises 674 residues: Secretin GspD (674 aa).

A signal peptide spans 1-24; it reads MKYWLKKSSWLLAGSLLSTPLAMA. Residues 25–121 form an N0 region; the sequence is NEFSASFKGT…VLSGEERANG (97 aa). Residues 123–187 form an N1 region; it reads EVITQVVAVK…EIIRRVDQAG (65 aa). An N2 region spans residues 188–261; sequence DKEIEVVELN…LIKQLDVEMA (74 aa). Residues 264–338 are N3; it reads GNNRVVYLKY…AMLEVIGQLD (75 aa). The secretin stretch occupies residues 343–612; it reads QVLIEALIVE…VFIKPTIIRD (270 aa). Residues 395-417 are cap gate; it reads DTTQTKAVYDTNNNFLRNETTTT. Residues 614–674 form a s domain region; that stretch reads VTADGITQRK…AFIEQMEAKQ (61 aa).

The protein belongs to the bacterial secretin family. GSP D subfamily. As to quaternary structure, forms a cylindrical channel with 15 subunits; unlike E.coli no 16-subunit channels are seen. The closed pentadeacameric channels are 195 Angstroms long and 145 Angstroms in diameter. Each subunit turns in a clock-wise manner around the channel.

It is found in the cell outer membrane. Involved in a type II secretion system (T2SS, formerly general secretion pathway, GSP) for the export of proteins. Required for secretion of cholera toxin through the outer membrane. This subunit forms the outer membrane channel. The sequence is that of Secretin GspD (epsD) from Vibrio cholerae serotype O1 (strain ATCC 39315 / El Tor Inaba N16961).